Consider the following 1308-residue polypeptide: Spermatogenesis-associated protein 31F1B (1308 aa).

Residues 7-27 traverse the membrane as a helical segment; it reads FLWDTECPLYVYFCFFIIVLI. Disordered regions lie at residues 464–488, 627–648, 844–863, 902–927, 1005–1026, 1084–1190, and 1204–1254; these read SPPI…LDEP, SQPG…AGKG, HGAQ…QPLL, PTAT…LLQG, FSTE…VAGK, GACP…AGLK, and MKSK…PKAQ. Residues 465–478 show a composition bias toward pro residues; sequence PPIPLPEAAPPPSS. Acidic residues predominate over residues 1107–1117; it reads METDSEQDMED.

Belongs to the SPATA31 family.

The protein resides in the membrane. The protein is Spermatogenesis-associated protein 31F1B of Mus musculus (Mouse).